The chain runs to 366 residues: tRNA(Met) cytidine acetate ligase (366 aa).

ATP contacts are provided by residues 7 to 20 (IAEFNPFHYGHQYL), G96, N152, and R175.

This sequence belongs to the TmcAL family.

It localises to the cytoplasm. The enzyme catalyses cytidine(34) in elongator tRNA(Met) + acetate + ATP = N(4)-acetylcytidine(34) in elongator tRNA(Met) + AMP + diphosphate. Functionally, catalyzes the formation of N(4)-acetylcytidine (ac(4)C) at the wobble position of elongator tRNA(Met), using acetate and ATP as substrates. First activates an acetate ion to form acetyladenylate (Ac-AMP) and then transfers the acetyl group to tRNA to form ac(4)C34. The chain is tRNA(Met) cytidine acetate ligase from Streptococcus equi subsp. zooepidemicus (strain MGCS10565).